Here is a 209-residue protein sequence, read N- to C-terminus: UPF0502 protein mll4256 (209 aa).

It belongs to the UPF0502 family.

The sequence is that of UPF0502 protein mll4256 from Mesorhizobium japonicum (strain LMG 29417 / CECT 9101 / MAFF 303099) (Mesorhizobium loti (strain MAFF 303099)).